The sequence spans 259 residues: uncharacterized protein (259 aa).

The first 22 residues, 1 to 22, serve as a signal peptide directing secretion; that stretch reads MKHSSKIIVFVSFLILTIFIGG. C23 is lipidated: N-palmitoyl cysteine. The S-diacylglycerol cysteine moiety is linked to residue C23.

It belongs to the staphylococcal tandem lipoprotein family.

It is found in the cell membrane. This is an uncharacterized protein from Staphylococcus epidermidis (strain ATCC 35984 / DSM 28319 / BCRC 17069 / CCUG 31568 / BM 3577 / RP62A).